The chain runs to 361 residues: Phosphoserine aminotransferase (361 aa).

Arginine 42 contacts L-glutamate. Pyridoxal 5'-phosphate is bound by residues 76 to 77, tryptophan 102, threonine 152, aspartate 172, and glutamine 195; that span reads AT. An N6-(pyridoxal phosphate)lysine modification is found at lysine 196. 237–238 lines the pyridoxal 5'-phosphate pocket; sequence NT.

The protein belongs to the class-V pyridoxal-phosphate-dependent aminotransferase family. SerC subfamily. Homodimer. Pyridoxal 5'-phosphate serves as cofactor.

The protein resides in the cytoplasm. The catalysed reaction is O-phospho-L-serine + 2-oxoglutarate = 3-phosphooxypyruvate + L-glutamate. It catalyses the reaction 4-(phosphooxy)-L-threonine + 2-oxoglutarate = (R)-3-hydroxy-2-oxo-4-phosphooxybutanoate + L-glutamate. Its pathway is amino-acid biosynthesis; L-serine biosynthesis; L-serine from 3-phospho-D-glycerate: step 2/3. It participates in cofactor biosynthesis; pyridoxine 5'-phosphate biosynthesis; pyridoxine 5'-phosphate from D-erythrose 4-phosphate: step 3/5. Its function is as follows. Catalyzes the reversible conversion of 3-phosphohydroxypyruvate to phosphoserine and of 3-hydroxy-2-oxo-4-phosphonooxybutanoate to phosphohydroxythreonine. This chain is Phosphoserine aminotransferase, found in Xanthomonas campestris pv. campestris (strain B100).